The following is an 843-amino-acid chain: uncharacterized protein (843 aa).

Residues 15-42 constitute a DNA-binding region (zn(2)-C6 fungal-type); sequence CLRCKQRKIKCDKLWPTCSKCKASSSIC.

The protein resides in the nucleus. In terms of biological role, required for growth on non-fermentable carbon sources. This is an uncharacterized protein from Saccharomyces cerevisiae (strain ATCC 204508 / S288c) (Baker's yeast).